The primary structure comprises 162 residues: Lipoprotein signal peptidase (162 aa).

4 helical membrane passes run 12 to 32, 42 to 62, 66 to 86, and 93 to 113; these read WFAL…YFNS, VVEG…FSFL, GGWQ…WLGW, and FSGL…GNVI. Catalysis depends on residues Asp-123 and Asp-142. The helical transmembrane segment at 133 to 153 threads the bilayer; the sequence is WYYPAFNLADSFICVGAALMV.

It belongs to the peptidase A8 family.

The protein localises to the cell inner membrane. It carries out the reaction Release of signal peptides from bacterial membrane prolipoproteins. Hydrolyzes -Xaa-Yaa-Zaa-|-(S,diacylglyceryl)Cys-, in which Xaa is hydrophobic (preferably Leu), and Yaa (Ala or Ser) and Zaa (Gly or Ala) have small, neutral side chains.. It functions in the pathway protein modification; lipoprotein biosynthesis (signal peptide cleavage). Its function is as follows. This protein specifically catalyzes the removal of signal peptides from prolipoproteins. The chain is Lipoprotein signal peptidase from Chromobacterium violaceum (strain ATCC 12472 / DSM 30191 / JCM 1249 / CCUG 213 / NBRC 12614 / NCIMB 9131 / NCTC 9757 / MK).